The primary structure comprises 300 residues: MKVLWAVLVVTLLAGCQADVEPELEAQEPAVWQNGQPWELALGRFWDYLRWVQTLSDQVQEELLSSQVTQELTVLMEDTMKEVKAYKSELEQELAPMAEETKARLSKELKAAQARLGADMEEVRNRLSQYRGEVQSMLGHSAEELRARLATHLRKLRKRLLRDAEDLQKRLAVYKAGASEGAERSVSAIRERLGSLVEQGRLRTAALTSQPLQERAQAWGERLRGRLEEVGSKARDRLDEVREQMEEVRLKVEEQAEAFQARLKGWFEPMMEDIRRQWADLIEKMQAAVGTSTPAPTQKP.

The first 18 residues, M1–A18, serve as a signal peptide directing secretion. An 8 X 22 AA approximate tandem repeats region spans residues V74–E246. 8 consecutive repeat copies span residues L75–A95, P96–G117, A118–G139, H140–L161, R162–E183, R184–A205, A206–R224, and G225–E243. Residue M137 is modified to Methionine sulfoxide. A Phosphoserine modification is found at S141. An LDL and other lipoprotein receptors binding region spans residues H152–R162. Heparin is bound at residue L156–R159. A lipid-binding and lipoprotein association region spans residues T204–I274. G220–L227 contacts heparin. Residues R262–I274 are specificity for association with VLDL.

Belongs to the apolipoprotein A1/A4/E family. In terms of assembly, homotetramer. May interact with ABCA1; functionally associated with ABCA1 in the biogenesis of HDLs. May interact with APP/A4 amyloid-beta peptide; the interaction is extremely stable in vitro but its physiological significance is unclear. May interact with MAPT. May interact with MAP2. In the cerebrospinal fluid, interacts with secreted SORL1. Interacts with PMEL; this allows the loading of PMEL luminal fragment on ILVs to induce fibril nucleation. In terms of processing, APOE exists as multiple glycosylated and sialylated glycoforms within cells and in plasma. The extent of glycosylation and sialylation are tissue and context specific. Glycated in plasma VLDL. Post-translationally, phosphorylated by FAM20C in the extracellular medium.

It localises to the secreted. The protein localises to the extracellular space. It is found in the extracellular matrix. The protein resides in the extracellular vesicle. Its subcellular location is the endosome. It localises to the multivesicular body. Functionally, APOE is an apolipoprotein, a protein associating with lipid particles, that mainly functions in lipoprotein-mediated lipid transport between organs via the plasma and interstitial fluids. APOE is a core component of plasma lipoproteins and is involved in their production, conversion and clearance. Apolipoproteins are amphipathic molecules that interact both with lipids of the lipoprotein particle core and the aqueous environment of the plasma. As such, APOE associates with chylomicrons, chylomicron remnants, very low density lipoproteins (VLDL) and intermediate density lipoproteins (IDL) but shows a preferential binding to high-density lipoproteins (HDL). It also binds a wide range of cellular receptors including the LDL receptor/LDLR, the LDL receptor-related proteins LRP1, LRP2 and LRP8 and the very low-density lipoprotein receptor/VLDLR that mediate the cellular uptake of the APOE-containing lipoprotein particles. Finally, APOE also has a heparin-binding activity and binds heparan-sulfate proteoglycans on the surface of cells, a property that supports the capture and the receptor-mediated uptake of APOE-containing lipoproteins by cells. A main function of APOE is to mediate lipoprotein clearance through the uptake of chylomicrons, VLDLs, and HDLs by hepatocytes. APOE is also involved in the biosynthesis by the liver of VLDLs as well as their uptake by peripheral tissues ensuring the delivery of triglycerides and energy storage in muscle, heart and adipose tissues. By participating in the lipoprotein-mediated distribution of lipids among tissues, APOE plays a critical role in plasma and tissues lipid homeostasis. APOE is also involved in two steps of reverse cholesterol transport, the HDLs-mediated transport of cholesterol from peripheral tissues to the liver, and thereby plays an important role in cholesterol homeostasis. First, it is functionally associated with ABCA1 in the biogenesis of HDLs in tissues. Second, it is enriched in circulating HDLs and mediates their uptake by hepatocytes. APOE also plays an important role in lipid transport in the central nervous system, regulating neuron survival and sprouting. This is Apolipoprotein E (APOE) from Dinomys branickii (Pacarana).